Consider the following 223-residue polypeptide: MGRGKIEIKRIENTTNRQVTFCKRRNGLLKKAYELSVLCDAEVALIVFSSRGRVYEYSNNNIKSTIDRYKKASSDSTNGGSTMEINAQYYQQESAKLRQQIQMLQNSNRHLMGDSLASLTVKELKQLENRLERGITRIRSKKHELLLAEIEYLQKREIELENESVYLRTKIAEVERLQQANMVSTHEFNAIQALVSRNFFQPNMIEGGSTGYPLPDKKVLHLG.

The MADS-box domain occupies Met1 to Asn61. Positions Ala87–Leu177 constitute a K-box domain.

In terms of tissue distribution, expressed in flowers and seeds. Expressed in endotesta cell layer of developing seeds.

It localises to the nucleus. Its function is as follows. Probable transcription factor involved in seed development. Plays a role in seed morphogenesis by promoting the correct development of endotesta cell layer, which directs the further development of the seed coat, the endosperm, and consequently the embryo. The chain is Agamous-like MADS-box protein AGL11 from Vitis vinifera (Grape).